The sequence spans 477 residues: UDP-N-acetylmuramate--L-alanine ligase (477 aa).

112–118 (GAHGKTT) serves as a coordination point for ATP.

Belongs to the MurCDEF family.

It is found in the cytoplasm. The enzyme catalyses UDP-N-acetyl-alpha-D-muramate + L-alanine + ATP = UDP-N-acetyl-alpha-D-muramoyl-L-alanine + ADP + phosphate + H(+). It participates in cell wall biogenesis; peptidoglycan biosynthesis. Cell wall formation. The polypeptide is UDP-N-acetylmuramate--L-alanine ligase (Delftia acidovorans (strain DSM 14801 / SPH-1)).